A 635-amino-acid polypeptide reads, in one-letter code: Phosphatidylserine decarboxylase proenzyme 2 (635 aa).

The C2 domain maps to 20-146 (KLQKFRIHRR…VVQEPESTCK (127 aa)). 2 EF-hand domains span residues 174–209 (TERRFAKRILSIVDYNEDGQLSFSEFSDLIKAFGNL) and 210–245 (VAANKKEELFKAADLNGDGVVTIDELAALLALQQEQ). Positions 187, 189, 191, 193, 198, 223, 225, 227, and 234 each coordinate Ca(2+). Active-site charge relay system; for autoendoproteolytic cleavage activity residues include aspartate 443, histidine 499, and serine 587. Catalysis depends on serine 587, which acts as the Schiff-base intermediate with substrate; via pyruvic acid; for decarboxylase activity. At serine 587 the chain carries Pyruvic acid (Ser); by autocatalysis.

Belongs to the phosphatidylserine decarboxylase family. PSD-B subfamily. Eukaryotic type II sub-subfamily. Heterodimer of a large membrane-associated beta subunit and a small pyruvoyl-containing alpha subunit. Pyruvate serves as cofactor. In terms of processing, is synthesized initially as an inactive proenzyme. Formation of the active enzyme involves a self-maturation process in which the active site pyruvoyl group is generated from an internal serine residue via an autocatalytic post-translational modification. Two non-identical subunits are generated from the proenzyme in this reaction, and the pyruvate is formed at the N-terminus of the alpha chain, which is derived from the carboxyl end of the proenzyme. The autoendoproteolytic cleavage occurs by a canonical serine protease mechanism, in which the side chain hydroxyl group of the serine supplies its oxygen atom to form the C-terminus of the beta chain, while the remainder of the serine residue undergoes an oxidative deamination to produce ammonia and the pyruvoyl prosthetic group on the alpha chain. During this reaction, the Ser that is part of the protease active site of the proenzyme becomes the pyruvoyl prosthetic group, which constitutes an essential element of the active site of the mature decarboxylase. As to expression, highly expressed in flowers and at lower levels in leaves.

The protein localises to the vacuole membrane. It carries out the reaction a 1,2-diacyl-sn-glycero-3-phospho-L-serine + H(+) = a 1,2-diacyl-sn-glycero-3-phosphoethanolamine + CO2. It functions in the pathway phospholipid metabolism; phosphatidylethanolamine biosynthesis; phosphatidylethanolamine from CDP-diacylglycerol: step 2/2. Its function is as follows. Catalyzes the formation of phosphatidylethanolamine (PtdEtn) from phosphatidylserine (PtdSer). Plays a central role in phospholipid metabolism and in the interorganelle trafficking of phosphatidylserine. Contributes only to a minor proportion of PtdEtn production. The sequence is that of Phosphatidylserine decarboxylase proenzyme 2 (PSD2) from Arabidopsis thaliana (Mouse-ear cress).